We begin with the raw amino-acid sequence, 657 residues long: UvrABC system protein B (657 aa).

A Helicase ATP-binding domain is found at Asn25–Arg182. Residue Gly38–Thr45 coordinates ATP. The Beta-hairpin signature appears at Tyr91–Ile114. The 167-residue stretch at Gln429 to Ile595 folds into the Helicase C-terminal domain. Positions Asp621–Gly656 constitute a UVR domain.

The protein belongs to the UvrB family. As to quaternary structure, forms a heterotetramer with UvrA during the search for lesions. Interacts with UvrC in an incision complex.

It localises to the cytoplasm. In terms of biological role, the UvrABC repair system catalyzes the recognition and processing of DNA lesions. A damage recognition complex composed of 2 UvrA and 2 UvrB subunits scans DNA for abnormalities. Upon binding of the UvrA(2)B(2) complex to a putative damaged site, the DNA wraps around one UvrB monomer. DNA wrap is dependent on ATP binding by UvrB and probably causes local melting of the DNA helix, facilitating insertion of UvrB beta-hairpin between the DNA strands. Then UvrB probes one DNA strand for the presence of a lesion. If a lesion is found the UvrA subunits dissociate and the UvrB-DNA preincision complex is formed. This complex is subsequently bound by UvrC and the second UvrB is released. If no lesion is found, the DNA wraps around the other UvrB subunit that will check the other stand for damage. This is UvrABC system protein B from Clostridium beijerinckii (strain ATCC 51743 / NCIMB 8052) (Clostridium acetobutylicum).